A 425-amino-acid polypeptide reads, in one-letter code: Cyclin-K (425 aa).

The interval 262–425 is disordered; the sequence is GKQPIPQQPP…RRYLDDDRNL (164 aa). A compositionally biased stretch (low complexity) spans 366 to 377; sequence AEPAAASELDPA. The segment covering 379–399 has biased composition (pro residues); sequence GPAPPLPHGAPPPLPHRPPPT.

This sequence belongs to the cyclin family.

It is found in the nucleus. Its function is as follows. Regulatory subunit of cyclin-dependent kinases that mediates activation of target kinases. Plays a role in transcriptional regulation via its role in regulating the phosphorylation of the C-terminal domain (CTD) of the large subunit of RNA polymerase II (POLR2A). The sequence is that of Cyclin-K (ccnk) from Danio rerio (Zebrafish).